The sequence spans 165 residues: SsrA-binding protein (165 aa).

Residues 135–158 are compositionally biased toward basic and acidic residues; sequence QAHDKRQDMARRDAQREVTRELGR. The disordered stretch occupies residues 135-165; the sequence is QAHDKRQDMARRDAQREVTRELGRRVKGMTS.

The protein belongs to the SmpB family.

The protein resides in the cytoplasm. Required for rescue of stalled ribosomes mediated by trans-translation. Binds to transfer-messenger RNA (tmRNA), required for stable association of tmRNA with ribosomes. tmRNA and SmpB together mimic tRNA shape, replacing the anticodon stem-loop with SmpB. tmRNA is encoded by the ssrA gene; the 2 termini fold to resemble tRNA(Ala) and it encodes a 'tag peptide', a short internal open reading frame. During trans-translation Ala-aminoacylated tmRNA acts like a tRNA, entering the A-site of stalled ribosomes, displacing the stalled mRNA. The ribosome then switches to translate the ORF on the tmRNA; the nascent peptide is terminated with the 'tag peptide' encoded by the tmRNA and targeted for degradation. The ribosome is freed to recommence translation, which seems to be the essential function of trans-translation. In Mycolicibacterium vanbaalenii (strain DSM 7251 / JCM 13017 / BCRC 16820 / KCTC 9966 / NRRL B-24157 / PYR-1) (Mycobacterium vanbaalenii), this protein is SsrA-binding protein.